The sequence spans 202 residues: dTTP/UTP pyrophosphatase (202 aa).

Aspartate 74 (proton acceptor) is an active-site residue.

The protein belongs to the Maf family. YhdE subfamily. It depends on a divalent metal cation as a cofactor.

The protein localises to the cytoplasm. The catalysed reaction is dTTP + H2O = dTMP + diphosphate + H(+). It catalyses the reaction UTP + H2O = UMP + diphosphate + H(+). In terms of biological role, nucleoside triphosphate pyrophosphatase that hydrolyzes dTTP and UTP. May have a dual role in cell division arrest and in preventing the incorporation of modified nucleotides into cellular nucleic acids. The protein is dTTP/UTP pyrophosphatase of Methylococcus capsulatus (strain ATCC 33009 / NCIMB 11132 / Bath).